Here is a 201-residue protein sequence, read N- to C-terminus: Riboflavin synthase (201 aa).

Lumazine-binding repeat units follow at residues 1–97 (MFTG…LGGH) and 98–197 (IVQG…ERLM). 2,4-dihydroxypteridine-binding positions include 4–6 (GIV), 47–49 (CLT), 62–67 (DVMAET), 101–103 (GHV), Lys136, 145–147 (SLT), and 162–167 (SLIPTT).

Homotrimer.

It carries out the reaction 2 6,7-dimethyl-8-(1-D-ribityl)lumazine + H(+) = 5-amino-6-(D-ribitylamino)uracil + riboflavin. The protein operates within cofactor biosynthesis; riboflavin biosynthesis; riboflavin from 2-hydroxy-3-oxobutyl phosphate and 5-amino-6-(D-ribitylamino)uracil: step 2/2. In terms of biological role, catalyzes the dismutation of two molecules of 6,7-dimethyl-8-ribityllumazine, resulting in the formation of riboflavin and 5-amino-6-(D-ribitylamino)uracil. This Mycobacterium bovis (strain ATCC BAA-935 / AF2122/97) protein is Riboflavin synthase (ribE).